The primary structure comprises 119 residues: Large ribosomal subunit protein P3z (119 aa).

The span at 79–90 shows a compositional bias: gly residues; the sequence is AGGAASSGGGAG. The segment at 79–119 is disordered; it reads AGGAASSGGGAGEAAAAPKEDEKKKEESEEEEGDFGFDLFG. Residues 96–105 are compositionally biased toward basic and acidic residues; the sequence is PKEDEKKKEE.

The protein belongs to the eukaryotic ribosomal protein P1/P2 family. In terms of processing, phosphorylated.

Plays an important role in the elongation step of protein synthesis. The polypeptide is Large ribosomal subunit protein P3z (RPP3A) (Arabidopsis thaliana (Mouse-ear cress)).